The sequence spans 657 residues: Glycogen debranching enzyme (657 aa).

Aspartate 336 functions as the Nucleophile in the catalytic mechanism. The active-site Proton donor is the glutamate 371. A compositionally biased stretch (basic and acidic residues) spans 458 to 467 (NEANGEENRD). The disordered stretch occupies residues 458–479 (NEANGEENRDGTNNNYSNNHGK).

It belongs to the glycosyl hydrolase 13 family.

The enzyme catalyses Hydrolysis of (1-&gt;6)-alpha-D-glucosidic linkages to branches with degrees of polymerization of three or four glucose residues in limit dextrin.. It functions in the pathway glycan degradation; glycogen degradation. Its function is as follows. Removes maltotriose and maltotetraose chains that are attached by 1,6-alpha-linkage to the limit dextrin main chain, generating a debranched limit dextrin. This chain is Glycogen debranching enzyme, found in Escherichia coli (strain K12 / DH10B).